The sequence spans 1199 residues: DNA-directed RNA polymerase subunit beta' (1199 aa).

Cys60, Cys62, Cys75, and Cys78 together coordinate Zn(2+). 3 residues coordinate Mg(2+): Asp449, Asp451, and Asp453. Zn(2+)-binding residues include Cys818, Cys892, Cys899, and Cys902.

The protein belongs to the RNA polymerase beta' chain family. As to quaternary structure, RNAP is composed of a core of 2 alpha, a beta and a beta' subunit. The core is associated with a delta subunit, and at least one of epsilon or omega. When a sigma factor is associated with the core the holoenzyme is formed, which can initiate transcription. Mg(2+) serves as cofactor. The cofactor is Zn(2+).

It catalyses the reaction RNA(n) + a ribonucleoside 5'-triphosphate = RNA(n+1) + diphosphate. Its function is as follows. DNA-dependent RNA polymerase catalyzes the transcription of DNA into RNA using the four ribonucleoside triphosphates as substrates. The protein is DNA-directed RNA polymerase subunit beta' of Bacillus subtilis (strain 168).